The chain runs to 383 residues: ATP phosphoribosyltransferase regulatory subunit (383 aa).

The protein belongs to the class-II aminoacyl-tRNA synthetase family. HisZ subfamily. In terms of assembly, heteromultimer composed of HisG and HisZ subunits.

The protein resides in the cytoplasm. Its pathway is amino-acid biosynthesis; L-histidine biosynthesis; L-histidine from 5-phospho-alpha-D-ribose 1-diphosphate: step 1/9. Its function is as follows. Required for the first step of histidine biosynthesis. May allow the feedback regulation of ATP phosphoribosyltransferase activity by histidine. This Paraburkholderia xenovorans (strain LB400) protein is ATP phosphoribosyltransferase regulatory subunit.